The sequence spans 879 residues: Pentatricopeptide repeat-containing protein At1g71210, mitochondrial (879 aa).

The transit peptide at 1–44 (MLRCWSVTVERSCEGMLLRRRILSLSASSFRNFTSGNNGDAIPF) directs the protein to the mitochondrion. PPR repeat units follow at residues 181 to 215 (SLRLCDALVVGYAVAGRTDIALQHFGNMRFRGLDL), 216 to 246 (DSFGYHVLLNALVEEKCFDSFDVIFDQISVR), 250 to 280 (CAVTHSILVKKFCKQGKLDEAEDYLRALLPN), 285 to 319 (CGSGLGILVDALCSKRKFQEATKLLDEIKLVGTVN), 320 to 355 (MDRAYNIWIRALIKAGFLNNPADFLQKISPLEGCEL), 356 to 390 (EVFRYNSMVFQLLKENNLDGVYDILTEMMVRGVSP), 391 to 425 (NKKTMNAALCFFCKAGFVDEALELYRSRSEIGFAP), 426 to 460 (TAMSYNYLIHTLCANESVEQAYDVLKGAIDRGHFL), 461 to 495 (GGKTFSTLTNALCWKGKPDMARELVIAAAERDLLP), 496 to 530 (KRIAGCKIISALCDVGKVEDALMINELFNKSGVDT), 531 to 565 (SFKMFTSLIYGSITLMRGDIAAKLIIRMQEKGYTP), 566 to 597 (TRSLYRNVIQCVCEMESGEKNFFTTLLKFQLS), 602 to 636 (KVQAYNLFIEGAGFAGKPKLARLVYDMMDRDGITP), 637 to 667 (TVASNILMLQSYLKNEKIADALHFFHDLREQ), 671 to 705 (KKRLYQVMIVGLCKANKLDDAMHFLEEMKGEGLQP), and 706 to 740 (SIECYEVNIQKLCNEEKYDEAVGLVNEFRKSGRRI).

The protein belongs to the PPR family. P subfamily.

The protein localises to the mitochondrion. This is Pentatricopeptide repeat-containing protein At1g71210, mitochondrial from Arabidopsis thaliana (Mouse-ear cress).